Consider the following 347-residue polypeptide: N-acetyl-gamma-glutamyl-phosphate reductase (347 aa).

Cysteine 150 is an active-site residue.

The protein belongs to the NAGSA dehydrogenase family. Type 1 subfamily.

Its subcellular location is the cytoplasm. The catalysed reaction is N-acetyl-L-glutamate 5-semialdehyde + phosphate + NADP(+) = N-acetyl-L-glutamyl 5-phosphate + NADPH + H(+). The protein operates within amino-acid biosynthesis; L-arginine biosynthesis; N(2)-acetyl-L-ornithine from L-glutamate: step 3/4. Its function is as follows. Catalyzes the NADPH-dependent reduction of N-acetyl-5-glutamyl phosphate to yield N-acetyl-L-glutamate 5-semialdehyde. This chain is N-acetyl-gamma-glutamyl-phosphate reductase, found in Leifsonia xyli subsp. xyli (strain CTCB07).